The following is a 402-amino-acid chain: GDSL esterase/lipase At1g20120 (402 aa).

The signal sequence occupies residues 1–35; it reads MLQDRVSGSLSSSKISRCVLFLSLFCFFLLTMHAS. The interval 41 to 69 is disordered; that stretch reads RVPNPGPSPAPEPKPCPSPGPNPAPATTK. Over residues 44 to 64 the composition is skewed to pro residues; that stretch reads NPGPSPAPEPKPCPSPGPNPA. N-linked (GlcNAc...) asparagine glycosylation occurs at N73. S85 serves as the catalytic Nucleophile. N314 and N367 each carry an N-linked (GlcNAc...) asparagine glycan. Residues D375 and H378 contribute to the active site.

The protein belongs to the 'GDSL' lipolytic enzyme family.

Its subcellular location is the secreted. This Arabidopsis thaliana (Mouse-ear cress) protein is GDSL esterase/lipase At1g20120.